Consider the following 505-residue polypeptide: Metal transporter Nramp3.2 (505 aa).

12 helical membrane-spanning segments follow: residues leucine 50 to leucine 70, alanine 78 to valine 98, methionine 127 to glycine 147, phenylalanine 159 to leucine 179, leucine 187 to alanine 207, alanine 233 to valine 253, alanine 280 to tyrosine 300, tyrosine 321 to glutamine 341, alanine 369 to threonine 389, tryptophan 400 to valine 420, alanine 439 to phenylalanine 459, and alanine 466 to isoleucine 486.

This sequence belongs to the NRAMP (TC 2.A.55) family. As to expression, expressed in roots, stems, buds and leaves.

Its subcellular location is the vacuole membrane. The enzyme catalyses Mn(2+)(in) = Mn(2+)(out). It catalyses the reaction Fe(2+)(in) = Fe(2+)(out). Divalent metal transporter. Can transport manganese (Mn) and iron (Fe). Involved in the release of metals stored in the vacuole. The chain is Metal transporter Nramp3.2 from Populus trichocarpa (Western balsam poplar).